Consider the following 264-residue polypeptide: Polyneuridine aldehyde esterase (264 aa).

A propeptide spanning residues 1–6 (MHSAAN) is cleaved from the precursor. In terms of domain architecture, AB hydrolase-1 spans 12–122 (HFVLVHGGCL…MMPDPNHSLT (111 aa)). Catalysis depends on residues Ser-87, Asp-216, and His-244. Ser-87 is a binding site for 16-epivellosimine.

This sequence belongs to the AB hydrolase superfamily. In terms of assembly, homodimer; homodimerizes in aqueous solutions at pH 7.0. Mainly expressed in roots and, to a lower level, in leaves.

The enzyme catalyses polyneuridine aldehyde + H2O = 16-epivellosimine + methanol + CO2. Its pathway is alkaloid biosynthesis; ajmaline biosynthesis. Its activity is regulated as follows. Inhibited by DEPC and HgCl(2). In terms of biological role, hydrolase involved in the biosynthesis of ajmaline-type monoterpenoid indole alkaloids (MIAs) natural products, important plant-derived pharmaceuticals used in the therapy of heart disorders. Catalyzes the hydrolysis of polyneuridine aldehyde into epi-vellosimine, precursor of vomilenine, an intermediate chemical in the biosynthesis of ajmaline. The polypeptide is Polyneuridine aldehyde esterase (Rauvolfia serpentina (Serpentine wood)).